Reading from the N-terminus, the 235-residue chain is 7-cyano-7-deazaguanine synthase (235 aa).

12–22 lines the ATP pocket; sequence FSGGQDSTACL. Zn(2+)-binding residues include Cys200, Cys215, Cys218, and Cys221.

The protein belongs to the QueC family. Requires Zn(2+) as cofactor.

The enzyme catalyses 7-carboxy-7-deazaguanine + NH4(+) + ATP = 7-cyano-7-deazaguanine + ADP + phosphate + H2O + H(+). Its pathway is purine metabolism; 7-cyano-7-deazaguanine biosynthesis. In terms of biological role, catalyzes the ATP-dependent conversion of 7-carboxy-7-deazaguanine (CDG) to 7-cyano-7-deazaguanine (preQ(0)). The sequence is that of 7-cyano-7-deazaguanine synthase from Methylibium petroleiphilum (strain ATCC BAA-1232 / LMG 22953 / PM1).